A 202-amino-acid polypeptide reads, in one-letter code: UPF0301 protein BCG_0069 (202 aa).

The protein belongs to the UPF0301 (AlgH) family.

The polypeptide is UPF0301 protein BCG_0069 (Mycobacterium bovis (strain BCG / Pasteur 1173P2)).